We begin with the raw amino-acid sequence, 201 residues long: Large ribosomal subunit protein uL4 (201 aa).

A disordered region spans residues 42–67 (GNSAQKTRSEVSGGGKKPWNQKGTGR).

This sequence belongs to the universal ribosomal protein uL4 family. In terms of assembly, part of the 50S ribosomal subunit.

One of the primary rRNA binding proteins, this protein initially binds near the 5'-end of the 23S rRNA. It is important during the early stages of 50S assembly. It makes multiple contacts with different domains of the 23S rRNA in the assembled 50S subunit and ribosome. In terms of biological role, forms part of the polypeptide exit tunnel. The chain is Large ribosomal subunit protein uL4 from Legionella pneumophila (strain Lens).